The chain runs to 261 residues: Orotidine 5'-phosphate decarboxylase (261 aa).

Residues Asp-34, 56 to 58, 88 to 97, Tyr-214, and Arg-232 each bind substrate; these read KTH and DRKFADIGNT. Catalysis depends on Lys-90, which acts as the Proton donor.

It belongs to the OMP decarboxylase family.

It catalyses the reaction orotidine 5'-phosphate + H(+) = UMP + CO2. It participates in pyrimidine metabolism; UMP biosynthesis via de novo pathway; UMP from orotate: step 2/2. The chain is Orotidine 5'-phosphate decarboxylase (URA3) from Kodamaea ohmeri (Yeast).